We begin with the raw amino-acid sequence, 497 residues long: Glycerol kinase (497 aa).

Residue T11 participates in ADP binding. The ATP site is built by T11, S12, and S13. T11 is a sn-glycerol 3-phosphate binding site. An ADP-binding site is contributed by R15. The sn-glycerol 3-phosphate site is built by R81, E82, Y133, and D242. Glycerol contacts are provided by R81, E82, Y133, D242, and Q243. Residues T264 and G307 each coordinate ADP. Residues T264, G307, Q311, and G412 each contribute to the ATP site. 2 residues coordinate ADP: G412 and N416.

It belongs to the FGGY kinase family.

It carries out the reaction glycerol + ATP = sn-glycerol 3-phosphate + ADP + H(+). It functions in the pathway polyol metabolism; glycerol degradation via glycerol kinase pathway; sn-glycerol 3-phosphate from glycerol: step 1/1. With respect to regulation, inhibited by fructose 1,6-bisphosphate (FBP). Its function is as follows. Key enzyme in the regulation of glycerol uptake and metabolism. Catalyzes the phosphorylation of glycerol to yield sn-glycerol 3-phosphate. This chain is Glycerol kinase, found in Variovorax paradoxus (strain S110).